The primary structure comprises 373 residues: Sodium-dependent organic anion transporter (373 aa).

Residues 1–15 are compositionally biased toward polar residues; that stretch reads MSTDCAGNSTCPVNS. The segment at 1-21 is disordered; the sequence is MSTDCAGNSTCPVNSTEEDPP. Residues 1–32 lie on the Extracellular side of the membrane; the sequence is MSTDCAGNSTCPVNSTEEDPPVGMEGHANLKL. Residues Asn8 and Asn14 are each glycosylated (N-linked (GlcNAc...) asparagine). The helical transmembrane segment at 33–53 threads the bilayer; sequence LFTVLSAVMVGLVMFSFGCSV. The Cytoplasmic portion of the chain corresponds to 54–67; sequence ESQKLWLHLRRPWG. A helical transmembrane segment spans residues 68–88; the sequence is IAVGLLSQFGLMPLTAYLLAI. Residues 89-97 are Extracellular-facing; sequence GFGLKPFQA. The chain crosses the membrane as a helical span at residues 98 to 118; that stretch reads IAVLMMGSCPGGTISNVLTFW. Over 119-126 the chain is Cytoplasmic; that stretch reads VDGDMDLS. Residues 127–147 traverse the membrane as a helical segment; the sequence is ISMTTCSTVAALGMMPLCLYI. Residues 148 to 157 are Extracellular-facing; the sequence is YTRSWTLTQN. Residues 158–178 form a helical membrane-spanning segment; sequence LVIPYQSIGITLVSLVVPVAS. The Cytoplasmic portion of the chain corresponds to 179–195; the sequence is GVYVNYRWPKQATVILK. Residues 196-216 traverse the membrane as a helical segment; sequence VGAILGGMLLLVVAVTGMVLA. Over 217–224 the chain is Extracellular; sequence KGWNTDVT. The helical transmembrane segment at 225 to 245 threads the bilayer; sequence LLVISCIFPLVGHVTGFLLAF. Topologically, residues 246 to 265 are cytoplasmic; the sequence is LTHQSWQRCRTISIETGAQN. The helical transmembrane segment at 266 to 283 threads the bilayer; that stretch reads IQLCIAMLQLSFSAEYLV. Gln284 is a topological domain (extracellular). The chain crosses the membrane as a helical span at residues 285 to 305; that stretch reads LLNFALAYGLFQVLHGLLIVA. Over 306–373 the chain is Cytoplasmic; sequence AYQAYKRRQK…ELTSHIPSCE (68 aa).

This sequence belongs to the bile acid:sodium symporter (BASS) (TC 2.A.28) family. Glycosylated. Highest expression in lung and testis, moderate expression in heart, bladder and skin, and low expression in blood, liver, stomach, small intestine, spleen, kidney, adrenal gland, seminal vesicle, preputial gland, coagulating gland, lacrimal gland/eye, and brain.

It localises to the membrane. It catalyses the reaction estrone 3-sulfate(out) + 2 Na(+)(out) = estrone 3-sulfate(in) + 2 Na(+)(in). The enzyme catalyses 17beta-estradiol 3-sulfate(out) + 2 Na(+)(out) = 17beta-estradiol 3-sulfate(in) + 2 Na(+)(in). The catalysed reaction is dehydroepiandrosterone 3-sulfate(out) + 2 Na(+)(out) = dehydroepiandrosterone 3-sulfate(in) + 2 Na(+)(in). It carries out the reaction androst-5-ene-diol 3-sulfate(out) + 2 Na(+)(out) = androst-5-ene-diol 3-sulfate(in) + 2 Na(+)(in). It catalyses the reaction pregnenolone sulfate(out) + 2 Na(+)(out) = pregnenolone sulfate(in) + 2 Na(+)(in). The enzyme catalyses taurolithocholate 3-sulfate(out) + 2 Na(+)(out) = taurolithocholate 3-sulfate(in) + 2 Na(+)(in). The catalysed reaction is androsterone 3alpha-sulfate(out) + 2 Na(+)(out) = androsterone 3alpha-sulfate(in) + 2 Na(+)(in). It carries out the reaction 5alpha-dihydrotestosterone sulfate(out) + 2 Na(+)(out) = 5alpha-dihydrotestosterone sulfate(in) + 2 Na(+)(in). It catalyses the reaction 17beta-estradiol 17-sulfate(out) + 2 Na(+)(out) = 17beta-estradiol 17-sulfate(in) + 2 Na(+)(in). The enzyme catalyses 17alpha-hydroxypregnenolone 3-sulfate(out) + 2 Na(+)(out) = 17alpha-hydroxypregnenolone 3-sulfate(in) + 2 Na(+)(in). The catalysed reaction is epiandrosterone 3-sulfate(out) + 2 Na(+)(out) = epiandrosterone 3-sulfate(in) + 2 Na(+)(in). It carries out the reaction epitestosterone 17-sulfate(out) + 2 Na(+)(out) = epitestosterone 17-sulfate(in) + 2 Na(+)(in). It catalyses the reaction testosterone 17-sulfate(out) + 2 Na(+)(out) = testosterone 17-sulfate(in) + 2 Na(+)(in). The enzyme catalyses 16alpha-hydroxydehydroepiandrosterone 3-sulfate(out) + 2 Na(+)(out) = 16alpha-hydroxydehydroepiandrosterone 3-sulfate(in) + 2 Na(+)(in). Transports sulfoconjugated steroid hormones from the extracellular compartment into the cytosol in a sodium-dependent manner without hydrolysis. Steroid sulfate hormones are commonly considered to be biologically inactive metabolites, that may be activated by steroid sulfatases into free steroids. May play an important role by delivering sulfoconjugated steroids to specific target cells in reproductive organs. May play a role transporting the estriol precursor 16alpha-hydroxydehydroepiandrosterone 3-sulfate (16a-OH-DHEAS) at the fetal blood vessel endothelium. Can also transport other sulfoconjugated molecules such as taurolithocholic acid-3-sulfate and sulfoconjugated pyrenes. This chain is Sodium-dependent organic anion transporter (Slc10a6), found in Mus musculus (Mouse).